Reading from the N-terminus, the 348-residue chain is Flap endonuclease 1 (348 aa).

Positions 1–98 (MGLAELRELI…ETLERRRERK (98 aa)) are N-domain. Mg(2+) contacts are provided by Asp-28, Asp-80, Glu-149, Glu-151, Asp-170, Asp-172, and Asp-234. The segment at 113–256 (EREKYARQVA…RALQLIRKYG (144 aa)) is I-domain. The tract at residues 340–348 (RQETLDAFF) is interaction with PCNA.

This sequence belongs to the XPG/RAD2 endonuclease family. FEN1 subfamily. In terms of assembly, interacts with PCNA. PCNA stimulates the nuclease activity without altering cleavage specificity. The cofactor is Mg(2+).

Functionally, structure-specific nuclease with 5'-flap endonuclease and 5'-3' exonuclease activities involved in DNA replication and repair. During DNA replication, cleaves the 5'-overhanging flap structure that is generated by displacement synthesis when DNA polymerase encounters the 5'-end of a downstream Okazaki fragment. Binds the unpaired 3'-DNA end and kinks the DNA to facilitate 5' cleavage specificity. Cleaves one nucleotide into the double-stranded DNA from the junction in flap DNA, leaving a nick for ligation. Also involved in the base excision repair (BER) pathway. Acts as a genome stabilization factor that prevents flaps from equilibrating into structures that lead to duplications and deletions. Also possesses 5'-3' exonuclease activity on nicked or gapped double-stranded DNA. This is Flap endonuclease 1 from Methanopyrus kandleri (strain AV19 / DSM 6324 / JCM 9639 / NBRC 100938).